We begin with the raw amino-acid sequence, 1218 residues long: Thrombospondin type 1 domain-containing protein (1218 aa).

4 disordered regions span residues Ser-82–Ser-101, Ser-189–Arg-240, His-298–Leu-383, and Gly-445–Gly-471. The segment covering Gly-201–Ser-210 has biased composition (basic and acidic residues). The segment covering Ser-315 to Ser-375 has biased composition (low complexity). Residues Ser-638–Pro-704 enclose the TSP type-1 domain. The helical transmembrane segment at Gly-886–Val-906 threads the bilayer. The disordered stretch occupies residues Arg-1129 to Ala-1153.

In terms of assembly, component of a complex, at least composed of cysteine repeat modular protein A (CRMPa), cysteine repeat modular protein B (CRMPb), micronemal protein 15 (MIC15) and thrombospondin type 1 domain-containing protein (TSP1).

Its subcellular location is the membrane. Functionally, required for rhoptry secretion. Plays a role in host cell invasion. The chain is Thrombospondin type 1 domain-containing protein from Toxoplasma gondii.